The chain runs to 546 residues: MERLRGPSPLENTTARHPAPLGPAHRDGLEPGTADRVWDVCVIGSGASGAVAADRLVRQGLDVLMVEEGFRLAPHVGLDEAESLSRQALARDGEGNWTDEGWPWTTSNLGGGTVYYGGASFRYRPFDFDPGELVHTDGVDVRWPYTLADLVPYYEVLERRLGVCGGDAPGIHRGSRHSRGPAHQPSPAARVLRAAGESLGYRPFPTPLAINRDPHGGRAACARDSLCVSHLCPTGAKGDVVAVFLAPLAAHPNFALRTGVRALRLEQDRSGEVAAVRCLDRQTGQAHRVRARVYVVACNAIQSAALLLRSRTPYSPDGVGNHSHLVGRGLCMKLSEYLSGTVDADPAVLADPYTNTGPFSTVAFLDHYLDPDCPGGFGGLIYESKRDQRHKLVHDALELRIETILADHPNLDNRVGLSTHLDEDGMPAVVIDYTPDPRDLDRLRYMTGRCERLLRTAGARGIRSRSTGFAQGSSHLHGTCRAGHDPARSVVDAWGRVHSADNVYIVDGSFMPYPGGLNPTLTIQAHALRTSRAIASHLAADRAAHV.

The tract at residues 1–30 (MERLRGPSPLENTTARHPAPLGPAHRDGLE) is disordered. His475 acts as the Proton acceptor in catalysis.

This sequence belongs to the GMC oxidoreductase family. FAD serves as cofactor.

Its pathway is antibiotic biosynthesis; lividomycin biosynthesis. Its function is as follows. Glucosaminyl-6'-oxidase involved in the biosynthetic pathway of lividomycin by mediating FAD-dependent dehydrogenation of 6'''-hydroxyparomomycin to paromomycin. In Streptomyces lividus, this protein is 6'''-hydroxyparomomycin C oxidase (livQ).